The sequence spans 130 residues: Small ribosomal subunit protein uS11 (130 aa).

Positions 109–130 (EDVTPIPHDGTGRPGGKRGRRV) are disordered.

It belongs to the universal ribosomal protein uS11 family. Part of the 30S ribosomal subunit.

Functionally, located on the platform of the 30S subunit. The chain is Small ribosomal subunit protein uS11 from Methanosphaera stadtmanae (strain ATCC 43021 / DSM 3091 / JCM 11832 / MCB-3).